Here is a 439-residue protein sequence, read N- to C-terminus: Dihydroorotate dehydrogenase (quinone), mitochondrial (439 aa).

The N-terminal 22 residues, 1 to 22 (MMHRVGFNVIGRRSFFTVNARR), are a transit peptide targeting the mitochondrion. The helical transmembrane segment at 37–53 (LTALLLAGSAGYLYFMN) threads the bilayer. Residues 119 to 123 (AGLDK) and S143 contribute to the FMN site. K123 contributes to the substrate binding site. 168–172 (NRYGF) serves as a coordination point for substrate. The FMN site is built by N215 and N245. 245–250 (NVSSPN) contributes to the substrate binding site. S248 (nucleophile) is an active-site residue. 2 residues coordinate FMN: K296 and S324. 325-326 (NT) is a substrate binding site. FMN is bound by residues G350, G380, and 401-402 (YT).

Belongs to the dihydroorotate dehydrogenase family. Type 2 subfamily. Requires FMN as cofactor.

It is found in the mitochondrion inner membrane. The catalysed reaction is (S)-dihydroorotate + a quinone = orotate + a quinol. It functions in the pathway pyrimidine metabolism; UMP biosynthesis via de novo pathway; orotate from (S)-dihydroorotate (quinone route): step 1/1. Its function is as follows. Catalyzes the conversion of dihydroorotate to orotate with quinone as electron acceptor. In Candida glabrata (strain ATCC 2001 / BCRC 20586 / JCM 3761 / NBRC 0622 / NRRL Y-65 / CBS 138) (Yeast), this protein is Dihydroorotate dehydrogenase (quinone), mitochondrial (URA9).